Consider the following 122-residue polypeptide: Large ribosomal subunit protein uL14 (122 aa).

This sequence belongs to the universal ribosomal protein uL14 family. As to quaternary structure, part of the 50S ribosomal subunit. Forms a cluster with proteins L3 and L19. In the 70S ribosome, L14 and L19 interact and together make contacts with the 16S rRNA in bridges B5 and B8.

Functionally, binds to 23S rRNA. Forms part of two intersubunit bridges in the 70S ribosome. The sequence is that of Large ribosomal subunit protein uL14 from Acinetobacter baylyi (strain ATCC 33305 / BD413 / ADP1).